We begin with the raw amino-acid sequence, 239 residues long: Ribonuclease PH (239 aa).

Residues arginine 86 and 124–126 (GTR) contribute to the phosphate site.

It belongs to the RNase PH family. As to quaternary structure, homohexameric ring arranged as a trimer of dimers.

It carries out the reaction tRNA(n+1) + phosphate = tRNA(n) + a ribonucleoside 5'-diphosphate. Phosphorolytic 3'-5' exoribonuclease that plays an important role in tRNA 3'-end maturation. Removes nucleotide residues following the 3'-CCA terminus of tRNAs; can also add nucleotides to the ends of RNA molecules by using nucleoside diphosphates as substrates, but this may not be physiologically important. Probably plays a role in initiation of 16S rRNA degradation (leading to ribosome degradation) during starvation. The protein is Ribonuclease PH of Anaeromyxobacter dehalogenans (strain 2CP-1 / ATCC BAA-258).